A 555-amino-acid polypeptide reads, in one-letter code: 3-oxocholest-4-en-26-oate--CoA ligase (555 aa).

Residues 172–180, Asp-418, Arg-433, and Lys-524 contribute to the ATP site; that span reads TGGTTGHPK. The tract at residues 525 to 555 is disordered; sequence PDYRWAKDQTGLRPADEVYNNGDGNGAAATG. The span at 544–555 shows a compositional bias: low complexity; the sequence is NNGDGNGAAATG.

It belongs to the ATP-dependent AMP-binding enzyme family.

It carries out the reaction (25S)-3-oxocholest-4-en-26-oate + ATP + CoA = (25S)-3-oxocholest-4-en-26-oyl-CoA + AMP + diphosphate. Its pathway is steroid metabolism; cholesterol metabolism. Functionally, involved in the degradation of the side chains of C-24 branched-chain sterols. Catalyzes the ATP-dependent CoA thioesterification of the sterol 3-oxocholest-4-en-26-oate to yield 3-oxocholest-4-en-26-oyl-CoA. It can also use beta-sitosterol, campesterol and 3beta-hydroxy-5-cholesten-26-oate. In Rhodococcus rhodochrous, this protein is 3-oxocholest-4-en-26-oate--CoA ligase.